Here is a 158-residue protein sequence, read N- to C-terminus: C-type lectin galactose-binding isoform (158 aa).

Positions 1 to 20 (MGRFLLVTLSLLVVAFSLNG) are cleaved as a signal peptide. 3 cysteine pairs are disulfide-bonded: cysteine 26–cysteine 37, cysteine 54–cysteine 154, and cysteine 129–cysteine 146. The 123-residue stretch at 33–155 (KNGYCYKVFK…CTALRPFLCQ (123 aa)) folds into the C-type lectin domain. The Ca(2+) site is built by glutamine 119, aspartate 121, glutamate 127, asparagine 142, and aspartate 143. A Galactose-binding motif is present at residues 119–121 (QPD).

The protein belongs to the true venom lectin family. As to quaternary structure, homodimer; disulfide-linked. In terms of tissue distribution, expressed by the venom gland.

Its subcellular location is the secreted. Functionally, galactose-binding lectin that binds to and agglutinates erythrocytes in a calcium-dependent manner. The protein is C-type lectin galactose-binding isoform of Hoplocephalus stephensii (Stephens's banded snake).